The following is a 286-amino-acid chain: Bifunctional protein FolD (286 aa).

Residues Gly165 to Ser167 and Ser190 contribute to the NADP(+) site.

The protein belongs to the tetrahydrofolate dehydrogenase/cyclohydrolase family. Homodimer.

The catalysed reaction is (6R)-5,10-methylene-5,6,7,8-tetrahydrofolate + NADP(+) = (6R)-5,10-methenyltetrahydrofolate + NADPH. It carries out the reaction (6R)-5,10-methenyltetrahydrofolate + H2O = (6R)-10-formyltetrahydrofolate + H(+). It functions in the pathway one-carbon metabolism; tetrahydrofolate interconversion. Catalyzes the oxidation of 5,10-methylenetetrahydrofolate to 5,10-methenyltetrahydrofolate and then the hydrolysis of 5,10-methenyltetrahydrofolate to 10-formyltetrahydrofolate. The polypeptide is Bifunctional protein FolD (Staphylococcus epidermidis (strain ATCC 12228 / FDA PCI 1200)).